Here is a 662-residue protein sequence, read N- to C-terminus: Acetyl-coenzyme A synthetase (662 aa).

CoA-binding positions include 197-200 (RKGK) and Thr-317. ATP is bound by residues 393 to 395 (GEP), 417 to 422 (DTWWQT), Asp-510, and Arg-525. CoA is bound at residue Ser-533. Arg-536 contacts ATP. The Mg(2+) site is built by His-549 and Val-552. At Lys-623 the chain carries N6-acetyllysine.

This sequence belongs to the ATP-dependent AMP-binding enzyme family. It depends on Mg(2+) as a cofactor. In terms of processing, acetylated. Deacetylation by the SIR2-homolog deacetylase activates the enzyme.

It catalyses the reaction acetate + ATP + CoA = acetyl-CoA + AMP + diphosphate. In terms of biological role, catalyzes the conversion of acetate into acetyl-CoA (AcCoA), an essential intermediate at the junction of anabolic and catabolic pathways. AcsA undergoes a two-step reaction. In the first half reaction, AcsA combines acetate with ATP to form acetyl-adenylate (AcAMP) intermediate. In the second half reaction, it can then transfer the acetyl group from AcAMP to the sulfhydryl group of CoA, forming the product AcCoA. The polypeptide is Acetyl-coenzyme A synthetase (Helicobacter pylori (strain HPAG1)).